The chain runs to 370 residues: Quinolinate synthase (370 aa).

2 residues coordinate iminosuccinate: histidine 62 and serine 83. Cysteine 128 is a [4Fe-4S] cluster binding site. Residues 154–156 (YAN) and serine 171 each bind iminosuccinate. Cysteine 215 provides a ligand contact to [4Fe-4S] cluster. Residues 241–243 (HPE) and threonine 258 contribute to the iminosuccinate site. Position 312 (cysteine 312) interacts with [4Fe-4S] cluster.

Belongs to the quinolinate synthase family. Type 1 subfamily. Requires [4Fe-4S] cluster as cofactor.

The protein localises to the cytoplasm. The enzyme catalyses iminosuccinate + dihydroxyacetone phosphate = quinolinate + phosphate + 2 H2O + H(+). The protein operates within cofactor biosynthesis; NAD(+) biosynthesis; quinolinate from iminoaspartate: step 1/1. Functionally, catalyzes the condensation of iminoaspartate with dihydroxyacetone phosphate to form quinolinate. The polypeptide is Quinolinate synthase (Neisseria meningitidis serogroup C / serotype 2a (strain ATCC 700532 / DSM 15464 / FAM18)).